The sequence spans 287 residues: 2-dehydro-3-deoxyphosphooctonate aldolase (287 aa).

Belongs to the KdsA family.

It localises to the cytoplasm. The enzyme catalyses D-arabinose 5-phosphate + phosphoenolpyruvate + H2O = 3-deoxy-alpha-D-manno-2-octulosonate-8-phosphate + phosphate. Its pathway is carbohydrate biosynthesis; 3-deoxy-D-manno-octulosonate biosynthesis; 3-deoxy-D-manno-octulosonate from D-ribulose 5-phosphate: step 2/3. It functions in the pathway bacterial outer membrane biogenesis; lipopolysaccharide biosynthesis. The protein is 2-dehydro-3-deoxyphosphooctonate aldolase of Bradyrhizobium sp. (strain ORS 278).